The sequence spans 364 residues: Zinc transporter 3 (364 aa).

Residues 1-23 (MGAKKHTLQVLPWLLLFAQHTAA) form the signal peptide. Over 24–44 (SACDCANTTDGADRQGAMKLK) the chain is Extracellular. The N-linked (GlcNAc...) asparagine glycan is linked to asparagine 30. Residues 45–65 (LIAIASILAAGAAGVLVPVIG) traverse the membrane as a helical segment. The Cytoplasmic portion of the chain corresponds to 66–76 (RSMAALRPDGD). Residues 77–97 (IFFAVKAFAAGVILATGMVHI) traverse the membrane as a helical segment. Residues 98-119 (LPAAFDALTSPCLKRGGGDRNP) are Extracellular-facing. Residues 120–140 (FPFAGLVSMSAAVSTMVVDSL) traverse the membrane as a helical segment. Over 141–213 (AAGYYHRSQF…ESIRHKVVSQ (73 aa)) the chain is Cytoplasmic. Residues 214–234 (VLELGILVHSVIIGVSLGASV) traverse the membrane as a helical segment. Residues 235 to 241 (RPSTIRP) are Extracellular-facing. Residues 242–262 (LVGALSFHQFFEGVGLGGCIV) traverse the membrane as a helical segment. Residues 263 to 271 (QANFKVRAT) are Cytoplasmic-facing. The helical transmembrane segment at 272-292 (VIMAIFFSLTAPVGIVLGIAI) threads the bilayer. At 293-303 (SSSYNVHSSTA) the chain is on the extracellular side. Residues 304–324 (FVVEGVFNSASAGILIYMSLV) traverse the membrane as a helical segment. The Cytoplasmic portion of the chain corresponds to 325 to 343 (DLLATDFNNPKLQINTKLQ). A helical transmembrane segment spans residues 344 to 364 (LMAYLALFLGAGLMSMLAIWA).

This sequence belongs to the ZIP transporter (TC 2.A.5) family. As to expression, expressed in vascular bundles of stems.

The protein resides in the cell membrane. Functionally, zinc transporter that may mediate zinc uptake from the rhizosphere. Seems specific to zinc ions and may not transport other divalent cations. This chain is Zinc transporter 3 (ZIP3), found in Oryza sativa subsp. japonica (Rice).